The sequence spans 281 residues: Probable splicing factor, arginine/serine-rich 2 (281 aa).

An RRM 1 domain is found at 2–72 (VRVYIGRLPN…ERVILEFPRR (71 aa)). 2 stretches are compositionally biased toward basic and acidic residues: residues 78–97 (EERS…KGGE) and 168–190 (KLQG…DRSR). Disordered stretches follow at residues 78-100 (EERS…ERQF) and 168-281 (KLQG…SASP). Residues 112–186 (FRLVIDNLST…RKLKCTDETR (75 aa)) enclose the RRM 2 domain. Basic residues predominate over residues 191–215 (SRSPRRRSRSRSPTRSRSPPARRRS). Over residues 216–225 (PGSDRSDRKS) the composition is skewed to basic and acidic residues. Positions 245–254 (RSRSGGRRSR) are enriched in basic residues.

The protein belongs to the splicing factor SR family. Extensively phosphorylated on serine residues in the RS domain.

The protein resides in the nucleus. In terms of biological role, plays a functionally redundant role in spermatogenesis and growth rate control. Required for the development of somatic gonad structures and for progression from larval stage to adulthood. In Caenorhabditis elegans, this protein is Probable splicing factor, arginine/serine-rich 2 (rsp-2).